Here is a 322-residue protein sequence, read N- to C-terminus: Ubiquitin-conjugating enzyme E2 U (322 aa).

Positions R4–M153 constitute a UBC core domain. C89 serves as the catalytic Glycyl thioester intermediate.

Belongs to the ubiquitin-conjugating enzyme family. Post-translationally, autoubiquitinated in vitro in the presence of UBR5.

The catalysed reaction is S-ubiquitinyl-[E1 ubiquitin-activating enzyme]-L-cysteine + [E2 ubiquitin-conjugating enzyme]-L-cysteine = [E1 ubiquitin-activating enzyme]-L-cysteine + S-ubiquitinyl-[E2 ubiquitin-conjugating enzyme]-L-cysteine.. The protein operates within protein modification; protein ubiquitination. Its function is as follows. Catalyzes the covalent attachment of ubiquitin to other proteins. In Macaca fascicularis (Crab-eating macaque), this protein is Ubiquitin-conjugating enzyme E2 U (UBE2U).